The primary structure comprises 64 residues: Relaxin (64 aa).

3 cysteine pairs are disulfide-bonded: C11-C51, C23-C64, and C50-C55.

This sequence belongs to the insulin family. Heterodimer of a B chain and an A chain linked by two disulfide bonds.

Its subcellular location is the secreted. This chain is Relaxin, found in Leucoraja erinaceus (Little skate).